We begin with the raw amino-acid sequence, 118 residues long: Ribosome-binding factor A (118 aa).

The protein belongs to the RbfA family. Monomer. Binds 30S ribosomal subunits, but not 50S ribosomal subunits or 70S ribosomes.

The protein resides in the cytoplasm. In terms of biological role, one of several proteins that assist in the late maturation steps of the functional core of the 30S ribosomal subunit. Associates with free 30S ribosomal subunits (but not with 30S subunits that are part of 70S ribosomes or polysomes). Required for efficient processing of 16S rRNA. May interact with the 5'-terminal helix region of 16S rRNA. The protein is Ribosome-binding factor A of Thermodesulfovibrio yellowstonii (strain ATCC 51303 / DSM 11347 / YP87).